Consider the following 805-residue polypeptide: Transitional endoplasmic reticulum ATPase (805 aa).

S3 is modified (phosphoserine). Residues 247–253, N348, H384, and 521–526 contribute to the ATP site; these read PGTGKTL and GCGKTL. A disordered region spans residues 768-805; sequence FGSFRFPAGGQGGAGPSQGAGGGSGGSHFNEEEDDLYG. Residues 776 to 793 show a composition bias toward gly residues; that stretch reads GGQGGAGPSQGAGGGSGG.

The protein belongs to the AAA ATPase family. Homohexamer. Forms a ring-shaped particle of 12.5 nm diameter, that displays 6-fold radial symmetry. Interacts with the FACT/DUF complex, which includes subunits ssrp1/duf87 and supt16h/duf140. In terms of processing, phosphorylated.

It localises to the cytoplasm. It is found in the cytosol. The protein resides in the endoplasmic reticulum. Its subcellular location is the nucleus. The protein localises to the stress granule. It catalyses the reaction ATP + H2O = ADP + phosphate + H(+). With respect to regulation, ATPase activity is inhibited or reduced by lowering pH from 9.0 to 7.0, and by addition of Ca(2+), EDTA, KNO(3) or by treatment with N-ethylmaleimide (NEM). Its function is as follows. Necessary for the fragmentation of Golgi stacks during mitosis and for their reassembly after mitosis. Involved in the formation of the nuclear envelope, and of the transitional endoplasmic reticulum (tER). The transfer of membranes from the endoplasmic reticulum to the Golgi apparatus occurs via 50-70 nm transition vesicles which derive from part-rough, part-smooth transitional elements of the endoplasmic reticulum (tER). Vesicle budding from the tER is an ATP-dependent process. Involved in endoplasmic reticulum stress-induced pre-emptive quality control, a mechanism that selectively attenuates the translocation of newly synthesized proteins into the endoplasmic reticulum and reroutes them to the cytosol for proteasomal degradation. Involved in clearance process by mediating G3BP1 extraction from stress granules. Also involved in DNA damage response: recruited to double-strand breaks (DSBs) sites and promotes the recruitment of tp53bp1 at DNA damage sites. Together with sprtn metalloprotease, involved in the repair of covalent DNA-protein cross-links (DPCs) during DNA synthesis. Involved in interstrand cross-link repair in response to replication stress by mediating unloading of the ubiquitinated CMG helicase complex. Enhances cell cycle progression and inhibits apoptosis at low temperatures. Essential for the maturation of ubiquitin-containing autophagosomes and the clearance of ubiquitinated protein by autophagy. Acts as a negative regulator of type I interferon production by promoting ubiquitination of rigi. May play a role in the ubiquitin-dependent sorting of membrane proteins to lysosomes where they undergo degradation. May more particularly play a role in caveolins sorting in cells. By controlling the steady-state expression of the IGF1R receptor, indirectly regulates the insulin-like growth factor receptor signaling pathway. The chain is Transitional endoplasmic reticulum ATPase from Xenopus tropicalis (Western clawed frog).